A 300-amino-acid polypeptide reads, in one-letter code: Ubiquitin thioesterase otu2 (300 aa).

Disordered stretches follow at residues 23 to 73 (RKQL…QQED) and 89 to 141 (TAEK…SEKM). Basic and acidic residues predominate over residues 48 to 61 (LSQKHATERQKLDK). Residues 62–71 (GDEETNETQQ) show a composition bias toward acidic residues. The span at 89–109 (TAEKSSVQSSLNTKENTPQQP) shows a compositional bias: polar residues. Basic and acidic residues predominate over residues 115-141 (RQKERLERRKAEMKKMSEQAELESEKM). Residues 161–298 (LVAVDIPADG…GAHYNSLLYR (138 aa)) form the OTU domain.

Its subcellular location is the cytoplasm. The catalysed reaction is Thiol-dependent hydrolysis of ester, thioester, amide, peptide and isopeptide bonds formed by the C-terminal Gly of ubiquitin (a 76-residue protein attached to proteins as an intracellular targeting signal).. In terms of biological role, hydrolase that can remove conjugated ubiquitin from proteins and may therefore play an important regulatory role at the level of protein turnover by preventing degradation. The polypeptide is Ubiquitin thioesterase otu2 (otu2) (Schizosaccharomyces pombe (strain 972 / ATCC 24843) (Fission yeast)).